A 201-amino-acid polypeptide reads, in one-letter code: Putative 3-methyladenine DNA glycosylase (201 aa).

This sequence belongs to the DNA glycosylase MPG family.

This is Putative 3-methyladenine DNA glycosylase from Nitrosococcus oceani (strain ATCC 19707 / BCRC 17464 / JCM 30415 / NCIMB 11848 / C-107).